Reading from the N-terminus, the 213-residue chain is Ribosome maturation factor RimM (213 aa).

The region spanning 99-175 is the PRC barrel domain; that stretch reads DQDAAYISDL…RITMRLPEGL (77 aa). A disordered region spans residues 182-213; the sequence is TATAREPRARRTRKRGLRKPITGADATPPDSQ. Residues 189–199 show a composition bias toward basic residues; it reads RARRTRKRGLR.

This sequence belongs to the RimM family. Binds ribosomal protein uS19.

The protein localises to the cytoplasm. In terms of biological role, an accessory protein needed during the final step in the assembly of 30S ribosomal subunit, possibly for assembly of the head region. Essential for efficient processing of 16S rRNA. May be needed both before and after RbfA during the maturation of 16S rRNA. It has affinity for free ribosomal 30S subunits but not for 70S ribosomes. In Acidobacterium capsulatum (strain ATCC 51196 / DSM 11244 / BCRC 80197 / JCM 7670 / NBRC 15755 / NCIMB 13165 / 161), this protein is Ribosome maturation factor RimM.